A 79-amino-acid chain; its full sequence is Major outer membrane lipoprotein Lpp 2 (79 aa).

The first 21 residues, 1-21 (MNRTNKLILGAVVLGSALLAG), serve as a signal peptide directing secretion. Residue Cys-22 is the site of N-palmitoyl cysteine attachment. Residue Cys-22 is the site of S-diacylglycerol cysteine attachment. 2 repeats span residues 25–35 (NAKIDQLSSDV) and 39–49 (SAKVDQLSNDV). A coiled-coil region spans residues 28–76 (IDQLSSDVQTLSAKVDQLSNDVNAMRSDIQAAKDDAARANQRLDNKVSR). The disordered stretch occupies residues 60–79 (KDDAARANQRLDNKVSRVRK). The residue at position 79 (Lys-79) is an N6-murein peptidoglycan lysine.

It belongs to the Lpp family. As to quaternary structure, homotrimer.

Its subcellular location is the cell outer membrane. The protein localises to the secreted. It localises to the cell wall. Functionally, a highly abundant outer membrane lipoprotein that controls the distance between the inner and outer membranes. The only protein known to be covalently linked to the peptidoglycan network (PGN). Also non-covalently binds the PGN. The link between the cell outer membrane and PGN contributes to maintenance of the structural and functional integrity of the cell envelope, and maintains the correct distance between the PGN and the outer membrane. This chain is Major outer membrane lipoprotein Lpp 2, found in Salmonella paratyphi A (strain ATCC 9150 / SARB42).